The primary structure comprises 208 residues: RNA chaperone ProQ (208 aa).

Basic and acidic residues predominate over residues 106-127; that stretch reads SKAKVATRRKEQAKKAREEAKA. The tract at residues 106–154 is disordered; it reads SKAKVATRRKEQAKKAREEAKAKKTARAATPPKRRPQPAAKKVEQPVET.

The protein belongs to the ProQ family.

It localises to the cytoplasm. RNA chaperone with significant RNA binding, RNA strand exchange and RNA duplexing activities. In Aliivibrio fischeri (strain ATCC 700601 / ES114) (Vibrio fischeri), this protein is RNA chaperone ProQ.